A 124-amino-acid polypeptide reads, in one-letter code: Non-structural protein 2 (124 aa).

The DLNP; interaction with MAP1B signature appears at 121–124; that stretch reads DLNP.

It belongs to the pneumovirus non-structural protein 2 family. As to quaternary structure, monomer (instable). Homomultimer. Heteromultimer with NS1. Interacts with host RIGI (via N-terminus); this interaction prevents host signaling pathway involved in interferon production. Interacts with host MAP1B/microtubule-associated protein 1B.

It localises to the host mitochondrion. In terms of biological role, plays a major role in antagonizing the type I IFN-mediated antiviral response. Acts cooperatively with NS1 to repress activation and nuclear translocation of host IFN-regulatory factor IRF3. Interacts with the host cytoplasmic sensor of viral nucleic acids RIGI and prevents the interaction with its downstream partner MAVS. Together with NS2, participates in the proteasomal degradation of host STAT2, IRF3, IRF7, TBK1 and RIGI through a NS-degradasome involving CUL2 and Elongin-C. The degradasome requires an intact mitochondrial MAVS. Induces host SOCS1 expression. Induces activation of NF-kappa-B. Suppresses premature apoptosis by an NF-kappa-B-dependent, interferon-independent mechanism promoting continued viral replication. The polypeptide is Non-structural protein 2 (1B) (Bos taurus (Bovine)).